The primary structure comprises 236 residues: Uridylate kinase (236 aa).

Lys10–Gly13 provides a ligand contact to ATP. Position 52 (Gly52) interacts with UMP. Residues Gly53 and Arg57 each coordinate ATP. Residues Asp72 and Thr133–Thr140 each bind UMP. Residues Thr160, Tyr166, and Asp169 each contribute to the ATP site.

The protein belongs to the UMP kinase family. As to quaternary structure, homohexamer.

The protein resides in the cytoplasm. The enzyme catalyses UMP + ATP = UDP + ADP. Its pathway is pyrimidine metabolism; CTP biosynthesis via de novo pathway; UDP from UMP (UMPK route): step 1/1. Inhibited by UTP. Catalyzes the reversible phosphorylation of UMP to UDP. This is Uridylate kinase from Cupriavidus pinatubonensis (strain JMP 134 / LMG 1197) (Cupriavidus necator (strain JMP 134)).